Here is a 344-residue protein sequence, read N- to C-terminus: Methionine import ATP-binding protein MetN (344 aa).

The ABC transporter domain maps to 2 to 241 (IELQGLSQRF…PQHDVTRAMI (240 aa)). 38–45 (GRSGAGKS) lines the ATP pocket.

This sequence belongs to the ABC transporter superfamily. Methionine importer (TC 3.A.1.24) family. The complex is composed of two ATP-binding proteins (MetN), two transmembrane proteins (MetI) and a solute-binding protein (MetQ).

The protein resides in the cell inner membrane. It catalyses the reaction L-methionine(out) + ATP + H2O = L-methionine(in) + ADP + phosphate + H(+). It carries out the reaction D-methionine(out) + ATP + H2O = D-methionine(in) + ADP + phosphate + H(+). In terms of biological role, part of the ABC transporter complex MetNIQ involved in methionine import. Responsible for energy coupling to the transport system. This Cupriavidus necator (strain ATCC 17699 / DSM 428 / KCTC 22496 / NCIMB 10442 / H16 / Stanier 337) (Ralstonia eutropha) protein is Methionine import ATP-binding protein MetN.